Reading from the N-terminus, the 20-residue chain is Apidaecin 3+ (20 aa).

Residues 1–20 (GKPSRPRPAPIQPRPPHPRL) form a disordered region.

It belongs to the apidaecin family.

The protein localises to the secreted. Antimicrobial peptide active against many Gram-negative enterobacterial and plant-associated bacterial species. Not active against other bacterial species like H.pylori, P.mirabilis, B.pertussis or N.gonorrhoeae. Its function is as follows. Among others, also active against S.typhi. In terms of biological role, not active against S.typhi. This is Apidaecin 3+ from Pimpla disparis (Parasitic wasp).